The sequence spans 606 residues: CDPK-related kinase 8 (606 aa).

The segment covering 1 to 14 (MGGCTSKPSTSSGR) has biased composition (polar residues). The disordered stretch occupies residues 1-132 (MGGCTSKPST…TEVPQREEEE (132 aa)). Gly-2 carries N-myristoyl glycine lipidation. Over residues 98–110 (KHIRAALRRRKGK) the composition is skewed to basic residues. The 263-residue stretch at 150 to 412 (VELGEEIGRG…ASQALMHPWI (263 aa)) folds into the Protein kinase domain. Residues 156–164 (IGRGHFGYT) and Lys-182 contribute to the ATP site. Asp-278 acts as the Proton acceptor in catalysis. Phosphoserine is present on Ser-318. Residues 418 to 448 (DMNIPFDILIFRQMKAYLRSSSLRKAALRAL) are autoinhibitory domain. The tract at residues 437–457 (SSSLRKAALRALSKTLIKDEI) is calmodulin binding (CaMBD). 4 consecutive EF-hand domains span residues 455 to 491 (DEILYLKTQFSLLAPNKDGLITMDTIRMALASNATEA), 492 to 527 (MKESRIPEFLALLNGLQYRGMDFEEFCAAAINVHQH), 528 to 567 (ESLDCWEQSIRHAYELFDKNGNRAIVIEELASELGVGPSI), and 570 to 599 (HSVLHDWIRHTDGKLSFFGFVKLLHGVSVR). Asn-470, Asp-472, Glu-516, Asp-545, Asn-547, Asn-549, Glu-556, Asp-581, and Lys-583 together coordinate Ca(2+). Ser-585 bears the Phosphoserine mark.

This sequence belongs to the protein kinase superfamily. Ser/Thr protein kinase family. CDPK subfamily. Binds calmodulin (CaM) in a calcium-dependent manner. Autophosphorylated.

Its subcellular location is the membrane. It catalyses the reaction L-seryl-[protein] + ATP = O-phospho-L-seryl-[protein] + ADP + H(+). The catalysed reaction is L-threonyl-[protein] + ATP = O-phospho-L-threonyl-[protein] + ADP + H(+). With respect to regulation, activated by calcium and calmodulin. Autophosphorylation may play an important role in the regulation of the kinase activity. Functionally, may play a role in signal transduction pathways that involve calcium as a second messenger. This is CDPK-related kinase 8 (CRK8) from Arabidopsis thaliana (Mouse-ear cress).